A 408-amino-acid chain; its full sequence is Sprouty-related, EVH1 domain-containing protein 3 (408 aa).

The WH1 domain occupies 1–113; the sequence is MVRVRAVVMA…KSLLAALAAL (113 aa). Residues 118 to 226 form a disordered region; that stretch reads LTPSSSSSSS…YEDYRRSGPP (109 aa). Over residues 120-130 the composition is skewed to low complexity; sequence PSSSSSSSSPS. One can recognise a KBD domain in the interval 192 to 242; that stretch reads LPFTGIPEPSESLAGAGSQGWGSRGYEDYRRSGPPPPPLALSTCVVRFAKT. Arginine 238 bears the Asymmetric dimethylarginine mark. Arginine 246 carries the omega-N-methylarginine modification. The disordered stretch occupies residues 256–286; the sequence is LPAPLTEAAPPAPPARPPPGPGPTPAPAKAS. The segment covering 265–281 has biased composition (pro residues); it reads PPAPPARPPPGPGPTPA. Residues 294 to 405 form the SPR domain; it reads RCVHCRALFR…CAGCGGRHEE (112 aa).

In terms of assembly, interacts with palmitoyltransferase ZDHHC17/HIP14; the interaction leads to palmitoylation of SPRED3. Phosphorylated on tyrosine. In terms of processing, palmitoylated by ZDHHC17/HIP14. Post-translationally, ubiquitinated. As to expression, brain specific.

The protein localises to the cell membrane. Functionally, tyrosine kinase substrate that inhibits growth-factor-mediated activation of MAP kinase. Inhibits fibroblast growth factor (FGF)-induced retinal lens fiber differentiation, probably by inhibiting FGF-mediated phosphorylation of ERK1/2. Inhibits TGFB-induced epithelial-to-mesenchymal transition in lens epithelial cells. The polypeptide is Sprouty-related, EVH1 domain-containing protein 3 (Spred3) (Mus musculus (Mouse)).